The primary structure comprises 228 residues: NADH-quinone oxidoreductase subunit C (228 aa).

This sequence belongs to the complex I 30 kDa subunit family. NDH-1 is composed of 14 different subunits. Subunits NuoB, C, D, E, F, and G constitute the peripheral sector of the complex.

The protein resides in the cell membrane. The enzyme catalyses a quinone + NADH + 5 H(+)(in) = a quinol + NAD(+) + 4 H(+)(out). In terms of biological role, NDH-1 shuttles electrons from NADH, via FMN and iron-sulfur (Fe-S) centers, to quinones in the respiratory chain. The immediate electron acceptor for the enzyme in this species is believed to be a menaquinone. Couples the redox reaction to proton translocation (for every two electrons transferred, four hydrogen ions are translocated across the cytoplasmic membrane), and thus conserves the redox energy in a proton gradient. This Mycobacteroides abscessus (strain ATCC 19977 / DSM 44196 / CCUG 20993 / CIP 104536 / JCM 13569 / NCTC 13031 / TMC 1543 / L948) (Mycobacterium abscessus) protein is NADH-quinone oxidoreductase subunit C.